Here is a 22-residue protein sequence, read N- to C-terminus: thr operon leader peptide (22 aa).

Belongs to the thr operon leader peptide family.

Functionally, this protein is involved in control of the biosynthesis of threonine. This chain is thr operon leader peptide, found in Yersinia enterocolitica serotype O:8 / biotype 1B (strain NCTC 13174 / 8081).